The chain runs to 359 residues: UDP-N-acetylglucosamine--N-acetylmuramyl-(pentapeptide) pyrophosphoryl-undecaprenol N-acetylglucosamine transferase (359 aa).

UDP-N-acetyl-alpha-D-glucosamine is bound by residues threonine 12–glycine 14, asparagine 124, arginine 163, serine 191, isoleucine 245, alanine 264–glutamate 269, and glutamine 290.

Belongs to the glycosyltransferase 28 family. MurG subfamily.

It localises to the cell inner membrane. The enzyme catalyses di-trans,octa-cis-undecaprenyl diphospho-N-acetyl-alpha-D-muramoyl-L-alanyl-D-glutamyl-meso-2,6-diaminopimeloyl-D-alanyl-D-alanine + UDP-N-acetyl-alpha-D-glucosamine = di-trans,octa-cis-undecaprenyl diphospho-[N-acetyl-alpha-D-glucosaminyl-(1-&gt;4)]-N-acetyl-alpha-D-muramoyl-L-alanyl-D-glutamyl-meso-2,6-diaminopimeloyl-D-alanyl-D-alanine + UDP + H(+). Its pathway is cell wall biogenesis; peptidoglycan biosynthesis. Functionally, cell wall formation. Catalyzes the transfer of a GlcNAc subunit on undecaprenyl-pyrophosphoryl-MurNAc-pentapeptide (lipid intermediate I) to form undecaprenyl-pyrophosphoryl-MurNAc-(pentapeptide)GlcNAc (lipid intermediate II). In Nitrosococcus oceani (strain ATCC 19707 / BCRC 17464 / JCM 30415 / NCIMB 11848 / C-107), this protein is UDP-N-acetylglucosamine--N-acetylmuramyl-(pentapeptide) pyrophosphoryl-undecaprenol N-acetylglucosamine transferase.